Consider the following 77-residue polypeptide: Delta-conotoxin GmVIA (77 aa).

A signal peptide spans 1–22 (MKLTCMMIVAVLFLTAWTFVTA). Positions 23–48 (DDSGNGMEILFPKAGHEMENLEVSNR) are excised as a propeptide. Cystine bridges form between C52–C67, C59–C72, and C66–C76.

Belongs to the conotoxin O1 superfamily. In terms of tissue distribution, expressed by the venom duct.

It is found in the secreted. In terms of biological role, delta-conotoxins bind to site 6 of voltage-gated sodium channels (Nav) and inhibit the inactivation process. This toxin shows weak activity on rNav1.2/SCN2A (EC(50)=2.5 uM) and rNav1.4/SCN4A (EC(50)=4.8 uM). In vivo, injection of this peptide in the head region of garden snail induces retraction of the head and body into shell. This is followed by secretion of viscous green slime and a convulsive undulation into and out of the shell. No apparent biological activity was observed when a much greater dose of peptide was injected intraperitoneally into mice. The polypeptide is Delta-conotoxin GmVIA (Conus gloriamaris (Glory-of-the-Sea cone)).